Reading from the N-terminus, the 500-residue chain is 4-aminobutyrate aminotransferase, mitochondrial (500 aa).

A mitochondrion-targeting transit peptide spans Met-1–Ile-28. Position 163 (Cys-163) interacts with [2Fe-2S] cluster. Gly-164–Ser-165 lines the pyridoxal 5'-phosphate pocket. [2Fe-2S] cluster is bound at residue Cys-166. Substrate is bound at residue Arg-220. Lys-231 is modified (N6-succinyllysine). Position 252 is an N6-acetyllysine; alternate (Lys-252). Lys-252 is modified (N6-succinyllysine; alternate). Lys-279 and Lys-318 each carry N6-acetyllysine. Residue Lys-357 is modified to N6-(pyridoxal phosphate)lysine. A pyridoxal 5'-phosphate-binding site is contributed by Thr-381. N6-acetyllysine; alternate is present on Lys-413. Lys-413 is modified (N6-succinyllysine; alternate). Residues Lys-452 and Lys-470 each carry the N6-acetyllysine modification.

Belongs to the class-III pyridoxal-phosphate-dependent aminotransferase family. In terms of assembly, homodimer; disulfide-linked. The cofactor is pyridoxal 5'-phosphate. It depends on [2Fe-2S] cluster as a cofactor.

It localises to the mitochondrion matrix. The enzyme catalyses 4-aminobutanoate + 2-oxoglutarate = succinate semialdehyde + L-glutamate. The catalysed reaction is (S)-3-amino-2-methylpropanoate + 2-oxoglutarate = 2-methyl-3-oxopropanoate + L-glutamate. Functionally, catalyzes the conversion of gamma-aminobutyrate and L-beta-aminoisobutyrate to succinate semialdehyde and methylmalonate semialdehyde, respectively. Can also convert delta-aminovalerate and beta-alanine. This is 4-aminobutyrate aminotransferase, mitochondrial from Mus musculus (Mouse).